A 334-amino-acid polypeptide reads, in one-letter code: MKGKLINSFLMKKPKISVIGAGKVGENVAYLLTILGLGDVYLFARYKKGLEPAKAKALDLKQMAVLMDIDINVKGISYDKEGFEELKGSDIVVITAGIPRREGMSREDLLYENLKILKKFTDAIKEYAKDSIIIVVSNPVDTLTYATIKLTGFEPRRVIGMAGVLDSARFKNFVKEKIGISNADIRTLVLGTHGDLMVPVTSHSFIGDKPIEEVFSASEIDELIEKTRKGGAQIVSLMGTSAYYAPAASVVIMVESIINDRKRVMPCSVYVEGEAAKHYEIEGVCIGLPVVLGKKGVEDFELVNLSGYEKRELLRSAKTLKEMVSLADKLLNEL.

19-25 (IGAGKVG) provides a ligand contact to NAD(+). Residues Arg100 and Arg106 each coordinate substrate. NAD(+) is bound by residues Asn113 and 136-138 (VSN). The substrate site is built by Asn138 and Arg169. His193 functions as the Proton acceptor in the catalytic mechanism.

It belongs to the LDH/MDH superfamily.

It catalyses the reaction (S)-malate + NAD(+) = oxaloacetate + NADH + H(+). Functionally, catalyzes the reversible oxidation of malate to oxaloacetate. In Aquifex aeolicus (strain VF5), this protein is Malate dehydrogenase 2.